The following is a 288-amino-acid chain: Intermediate transcription factor 3 small subunit (288 aa).

It belongs to the orthopoxvirus OPG134 family. Heterodimer of a 45 kDa (A23R) and a 32 kDa (A8R) subunit to form the virus intermediate transcription factor (VITF)-3.

Its function is as follows. Acts with RNA polymerase to initiate transcription from intermediate gene promoters. In Vaccinia virus (strain Copenhagen) (VACV), this protein is Intermediate transcription factor 3 small subunit (OPG134).